We begin with the raw amino-acid sequence, 623 residues long: 1-deoxy-D-xylulose-5-phosphate synthase (623 aa).

Residues His-80 and 121–123 contribute to the thiamine diphosphate site; that span reads GHS. Asp-152 provides a ligand contact to Mg(2+). Residues 153–154, Asn-181, Tyr-289, and Glu-372 contribute to the thiamine diphosphate site; that span reads GA. Asn-181 contributes to the Mg(2+) binding site.

Belongs to the transketolase family. DXPS subfamily. Homodimer. It depends on Mg(2+) as a cofactor. Thiamine diphosphate serves as cofactor.

The catalysed reaction is D-glyceraldehyde 3-phosphate + pyruvate + H(+) = 1-deoxy-D-xylulose 5-phosphate + CO2. Its pathway is metabolic intermediate biosynthesis; 1-deoxy-D-xylulose 5-phosphate biosynthesis; 1-deoxy-D-xylulose 5-phosphate from D-glyceraldehyde 3-phosphate and pyruvate: step 1/1. In terms of biological role, catalyzes the acyloin condensation reaction between C atoms 2 and 3 of pyruvate and glyceraldehyde 3-phosphate to yield 1-deoxy-D-xylulose-5-phosphate (DXP). This Baumannia cicadellinicola subsp. Homalodisca coagulata protein is 1-deoxy-D-xylulose-5-phosphate synthase.